A 425-amino-acid polypeptide reads, in one-letter code: Histidine--tRNA ligase (425 aa).

Belongs to the class-II aminoacyl-tRNA synthetase family. In terms of assembly, homodimer.

The protein resides in the cytoplasm. The enzyme catalyses tRNA(His) + L-histidine + ATP = L-histidyl-tRNA(His) + AMP + diphosphate + H(+). The polypeptide is Histidine--tRNA ligase (Streptococcus uberis (strain ATCC BAA-854 / 0140J)).